A 151-amino-acid polypeptide reads, in one-letter code: 3-dehydroquinate dehydratase 1 (151 aa).

Tyr24 acts as the Proton acceptor in catalysis. 3 residues coordinate substrate: Asn75, His81, and Asp88. His101 acts as the Proton donor in catalysis. Substrate-binding positions include 102–103 (IS) and Arg112.

This sequence belongs to the type-II 3-dehydroquinase family. As to quaternary structure, homododecamer.

It carries out the reaction 3-dehydroquinate = 3-dehydroshikimate + H2O. The protein operates within metabolic intermediate biosynthesis; chorismate biosynthesis; chorismate from D-erythrose 4-phosphate and phosphoenolpyruvate: step 3/7. Functionally, catalyzes a trans-dehydration via an enolate intermediate. In Corynebacterium efficiens (strain DSM 44549 / YS-314 / AJ 12310 / JCM 11189 / NBRC 100395), this protein is 3-dehydroquinate dehydratase 1 (aroQ1).